The sequence spans 476 residues: ATP synthase subunit beta (476 aa).

153-160 (GGAGVGKT) provides a ligand contact to ATP.

The protein belongs to the ATPase alpha/beta chains family. In terms of assembly, F-type ATPases have 2 components, CF(1) - the catalytic core - and CF(0) - the membrane proton channel. CF(1) has five subunits: alpha(3), beta(3), gamma(1), delta(1), epsilon(1). CF(0) has three main subunits: a(1), b(2) and c(9-12). The alpha and beta chains form an alternating ring which encloses part of the gamma chain. CF(1) is attached to CF(0) by a central stalk formed by the gamma and epsilon chains, while a peripheral stalk is formed by the delta and b chains.

It localises to the cell membrane. It carries out the reaction ATP + H2O + 4 H(+)(in) = ADP + phosphate + 5 H(+)(out). In terms of biological role, produces ATP from ADP in the presence of a proton gradient across the membrane. The catalytic sites are hosted primarily by the beta subunits. In Latilactobacillus sakei subsp. sakei (strain 23K) (Lactobacillus sakei subsp. sakei), this protein is ATP synthase subunit beta.